Consider the following 762-residue polypeptide: MFIFIFLSLWTLLVMGREEGGVGSEEGVGKQCHPSLPPRCPSRSPSDQPWTHPDQSQLFADLSREELTTVMSFLTQQLGPDLVDAAQARPSDNCVFSVELQLPPKAAALAHLDRGSPPPAREALAIVFFGGQPQPNVTELVVGPLPQPSYMRDVTVERHGGPLPYYRRPVLLREYLDIDQMIFNRELPQAAGVLHHCCSYKQGGQKLLTMNSAPRGVQSGDRSTWFGIYYNITKGGPYLHPVGLELLVDHKALDPADWTVQKVFFQGRYYENLAQLEEQFEAGQVNVVVIPDDGTGGFWSLKSQVPPGPTPPLQFHPQGPRFSVQGNRVASSLWTFSFGLGAFSGPRVFDVRFQGERLAYEISLQEAGAVYGGNTPAAMLTRYMDSGFGMGYFATPLIRGVDCPYLATYMDWHFVVESQTPKTLHDAFCVFEQNKGLPLRRHHSDFLSHYFGGVAQTVLVFRSVSTMLNYDYVWDMVFYPNGAIEVKLHATGYISSAFLFGAARRYGNQVGEHTLGPVHTHSAHYKVDLDVGGLENWVWAEDMAFVPTAIPWSPEHQIQRLQVTRKQLETEEQAAFPLGGASPRYLYLASKQSNKWGHPRGYRIQTVSFAGGPMPQNSPMERAFSWGRYQLAITQRKETEPSSSSVFNQNDPWTPTVDFSDFINNETIAGKDLVAWVTAGFLHIPHAEDIPNTVTVGNGVGFFLRPYNFFDQEPSMDSADSIYFREGQDAGSCEINPLACLPQAATCAPDLPVFSHGGYPEY.

The N-terminal stretch at 1-16 (MFIFIFLSLWTLLVMG) is a signal peptide. Residues 23-54 (GSEEGVGKQCHPSLPPRCPSRSPSDQPWTHPD) form a disordered region. Asparagine 136 carries N-linked (GlcNAc...) asparagine glycosylation. Cysteine 197 and cysteine 198 are oxidised to a cystine. Asparagine 231 is a glycosylation site (N-linked (GlcNAc...) asparagine). Position 383–393 (383–393 (YMDSGFGMGYF)) interacts with substrate. The active-site Proton acceptor is the aspartate 385. An intrachain disulfide couples cysteine 403 to cysteine 429. 467-472 (MLNYDY) serves as a coordination point for substrate. Tyrosine 470 functions as the Schiff-base intermediate with substrate; via topaquinone in the catalytic mechanism. Tyrosine 470 bears the 2',4',5'-topaquinone mark. The Cu cation site is built by histidine 519 and histidine 521. Ca(2+)-binding residues include aspartate 528, leucine 529, aspartate 530, glutamate 571, phenylalanine 662, and asparagine 664. N-linked (GlcNAc...) asparagine glycosylation is present at asparagine 665. Residues glutamate 666, aspartate 672, and leucine 673 each coordinate Ca(2+). Histidine 683 is a binding site for Cu cation. An intrachain disulfide couples cysteine 733 to cysteine 740.

The protein belongs to the copper/topaquinone oxidase family. In terms of assembly, homodimer; disulfide-linked. Cu cation serves as cofactor. The cofactor is Ca(2+). L-topaquinone is required as a cofactor. In terms of processing, topaquinone (TPQ) is generated by copper-dependent autoxidation of a specific tyrosyl residue. Liver.

It is found in the secreted. The protein resides in the extracellular space. The catalysed reaction is a primary methyl amine + O2 + H2O = an aldehyde + H2O2 + NH4(+). In Bos taurus (Bovine), this protein is Primary amine oxidase, liver isozyme.